The chain runs to 161 residues: 2-C-methyl-D-erythritol 2,4-cyclodiphosphate synthase (161 aa).

The a divalent metal cation site is built by D14 and H16. Residues 14–16 (DVH) and 40–41 (HS) contribute to the 4-CDP-2-C-methyl-D-erythritol 2-phosphate site. An a divalent metal cation-binding site is contributed by H48. 4-CDP-2-C-methyl-D-erythritol 2-phosphate-binding positions include 62–64 (DLG), F142, and R145.

It belongs to the IspF family. Homotrimer. The cofactor is a divalent metal cation.

It catalyses the reaction 4-CDP-2-C-methyl-D-erythritol 2-phosphate = 2-C-methyl-D-erythritol 2,4-cyclic diphosphate + CMP. Its pathway is isoprenoid biosynthesis; isopentenyl diphosphate biosynthesis via DXP pathway; isopentenyl diphosphate from 1-deoxy-D-xylulose 5-phosphate: step 4/6. Involved in the biosynthesis of isopentenyl diphosphate (IPP) and dimethylallyl diphosphate (DMAPP), two major building blocks of isoprenoid compounds. Catalyzes the conversion of 4-diphosphocytidyl-2-C-methyl-D-erythritol 2-phosphate (CDP-ME2P) to 2-C-methyl-D-erythritol 2,4-cyclodiphosphate (ME-CPP) with a corresponding release of cytidine 5-monophosphate (CMP). This chain is 2-C-methyl-D-erythritol 2,4-cyclodiphosphate synthase, found in Acidothermus cellulolyticus (strain ATCC 43068 / DSM 8971 / 11B).